The chain runs to 35 residues: Kappa-theraphotoxin-Gr1b (35 aa).

3 disulfides stabilise this stretch: C2/C16, C9/C21, and C15/C28. An involved in active face region spans residues 4–6; sequence YLF.

Belongs to the neurotoxin 10 (Hwtx-1) family. 09 (HaTx) subfamily. As to expression, expressed by the venom gland.

It localises to the secreted. Its function is as follows. Inhibitor of voltage-gated potassium channels. Inhibits Kv2.1/KCNB1 channels, by shifting activation of the channel to more depolarized voltages. The toxin binding sites may be situated on the S3-S4 extracellular linker of the channel. One, two, three or four toxin molecules may bind the Kv2.1/KCNB1 channel. May need to partition into the membrane in order to bind to the channel. Antibacterial activity is not observed. This chain is Kappa-theraphotoxin-Gr1b, found in Grammostola rosea (Chilean rose tarantula).